We begin with the raw amino-acid sequence, 330 residues long: GTP 3',8-cyclase (330 aa).

One can recognise a Radical SAM core domain in the interval 9–225; sequence RFGRTVNYVR…IRRHHELIPA (217 aa). Arg18 contacts GTP. Positions 25 and 29 each coordinate [4Fe-4S] cluster. Tyr31 provides a ligand contact to S-adenosyl-L-methionine. Cys32 serves as a coordination point for [4Fe-4S] cluster. GTP is bound at residue Arg67. Gly71 serves as a coordination point for S-adenosyl-L-methionine. Thr97 contributes to the GTP binding site. Residue Ser121 coordinates S-adenosyl-L-methionine. Lys158 is a binding site for GTP. Residue Met192 coordinates S-adenosyl-L-methionine. [4Fe-4S] cluster is bound by residues Cys256 and Cys259. A GTP-binding site is contributed by 261-263; the sequence is RVR. Residue Cys273 participates in [4Fe-4S] cluster binding.

It belongs to the radical SAM superfamily. MoaA family. In terms of assembly, monomer and homodimer. Requires [4Fe-4S] cluster as cofactor.

The enzyme catalyses GTP + AH2 + S-adenosyl-L-methionine = (8S)-3',8-cyclo-7,8-dihydroguanosine 5'-triphosphate + 5'-deoxyadenosine + L-methionine + A + H(+). Its pathway is cofactor biosynthesis; molybdopterin biosynthesis. Functionally, catalyzes the cyclization of GTP to (8S)-3',8-cyclo-7,8-dihydroguanosine 5'-triphosphate. The polypeptide is GTP 3',8-cyclase (Marinobacter nauticus (strain ATCC 700491 / DSM 11845 / VT8) (Marinobacter aquaeolei)).